A 105-amino-acid polypeptide reads, in one-letter code: Synaptic plasticity regulator PANTS (105 aa).

It belongs to the UPF0545 family. As to quaternary structure, interacts with RTN4 isoform A/Nogo-A; the interaction results in enhanced RTN4-mediated inhibition of AMPA receptor clustering. Also interacts with NCAM1, RANBP2 and CCT8. Rapidly degraded by proteolysis following neuronal stimulation, resulting in increased AMPA receptor clustering. As to expression, in the postnatal brain, expressed diffusely throughout the hippocampus at a low level at 8 weeks (at protein level). At 16 weeks, strongly expressed in the stratum lucidum of the hippocampus (at protein level). In developing and aging brain, expression is strongest in hippocampus, especially in areas CA3 and CA2, throughout the dorsoventral axis.

The protein localises to the synapse. It is found in the synaptic cleft. Functionally, negatively regulates long-term potentiation and modulates adult synaptic plasticity. Stabilizes the interaction of RTN4 isoform A/Nogo-A with its receptors, inhibiting clustering of postsynaptic AMPA receptors at synaptic sites. Upon neuronal stimulation, degraded at synapses, reducing RTN4 signaling and allowing AMPA receptor clustering at individual synapses. This is Synaptic plasticity regulator PANTS from Mus musculus (Mouse).